The primary structure comprises 395 residues: Innexin inx3 (395 aa).

The Cytoplasmic segment spans residues 1-37; the sequence is MAVFGMVSAVSGFIKIRYLLDKAVIDNMVFRCHYRIT. Residues 38–58 form a helical membrane-spanning segment; the sequence is TAILFTCCIIVTANNLIGDPI. Over 59 to 114 the chain is Extracellular; that stretch reads SCINDGAIPMHVINTFCWITYTYTIPGQQHRQIGTDVAGPGLGNEYGQEKRYHSYY. A helical membrane pass occupies residues 115–135; the sequence is QWVPFVLFFQGLMFYVPHWVW. Topologically, residues 136 to 183 are cytoplasmic; it reads KNMEDGKIRMITDGLRGMVSVPDDYRRDRQDRILKYFVNSLNTHNGYS. The chain crosses the membrane as a helical span at residues 184–204; sequence FAYFFCELLNFINVIVNIFMV. The Extracellular segment spans residues 205-272; it reads DKFLGGAFMS…VLALNILNEK (68 aa). Residues 273 to 293 form a helical membrane-spanning segment; that stretch reads IYIFLWFWFIILATISGVAVL. Topologically, residues 294–395 are cytoplasmic; that stretch reads YSLVVIMMPT…TFGGGKETET (102 aa). Residues Ser366 and Ser377 each carry the phosphoserine modification. The residue at position 381 (Tyr381) is a Phosphotyrosine.

Belongs to the pannexin family. In terms of assembly, heterooligomer of Inx2 (via cytoplasmic C-terminal region) and Inx3 (via cytoplasmic C-terminal region). As to expression, in ovary, expressed in nurse cells and follicle cells. Expressed in embryonic epithelial cells. Ubiquitously expressed in stage 5 embryos. Expressed in foregut and hindgut from stage 11-17 and in proventriculus, epidermis and CNS in stage 16 embryos (at protein level). Expressed in anterior and ventral regions in stage 8 embryos. Repeating epidermal pattern emerges at stage 11, refines to one or two cells at each side of the segment borders by stage 13. Expressed in the imaginal wing disk. In pupae, expressed in the CNS and in secondary and tertiary pigment cells of the retina.

It is found in the cell membrane. Its subcellular location is the cell junction. It localises to the gap junction. The protein resides in the cytoplasm. The protein localises to the lateral cell membrane. It is found in the apicolateral cell membrane. Its function is as follows. Structural components of the gap junctions. Essential for proper epithelial development of the epidermis. This chain is Innexin inx3 (Inx3), found in Drosophila melanogaster (Fruit fly).